Consider the following 523-residue polypeptide: Metalloendopeptidase OMA1, mitochondrial (523 aa).

A mitochondrion-targeting transit peptide spans 1–45 (MSFIYGLQSAARNCFFFRFNLLTNWRKCNTQAVTSRDFHQVKINH). The propeptide occupies 46-143 (IVNKSLGLGV…RSFHTSPRCQ (98 aa)). Over 144–195 (AAPAPLLLMILKPAQKLLAIIVGRGIRKWWQALPPNKKELFKESLRKNKWKL) the chain is Mitochondrial matrix. Residues 148-167 (PLLLMILKPAQKLLAIIVGR) form a cardiolipin-binding region. The tract at residues 165-195 (VGRGIRKWWQALPPNKKELFKESLRKNKWKL) is stress-sensor region. Residues 196–216 (FLGLSSFGLLFVVFYFTHLEV) traverse the membrane as a helical segment. His-327 lines the Zn(2+) pocket. Residue Glu-328 is part of the active site. The Zn(2+) site is built by His-331 and Glu-392. The cysteines at positions 407 and 465 are disulfide-linked.

This sequence belongs to the peptidase M48 family. In terms of assembly, homooligomer. Zn(2+) serves as cofactor. In terms of processing, autocatalytically cleaved in response to mitochondrial depolarization both at the N-terminus and C-terminus to generate the short active form (S-OMA1). Autocatalytic processing at the C-terminus takes place at residues 447-456. The S-OMA1 form is unstable. OMA1 pre-processing by AFG3L2 may participate in maturation before OMA1 autocatalytic cleavage. Degraded by YMEL1 in response to membrane depolarization. Protein turnover is regulated by prohibitin (PHB and PHB2), which promotes degradation of OMA1 in a cardiolipin-binding manner. May form a redox-dependent disulfide bond. Exists in a semi-oxidized state and is activated by prolonged hypoxia.

It is found in the mitochondrion inner membrane. Protease activity is activated upon autocatalytic cleavage in response to mitochondrial depolarization. Metalloprotease that is part of the quality control system in the inner membrane of mitochondria. Activated in response to various mitochondrial stress, leading to the proteolytic cleavage of target proteins, such as OPA1, UQCC3 and DELE1. Involved in the fusion of the mitochondrial inner membranes by mediating cleavage of OPA1 at S1 position, generating the soluble OPA1 (S-OPA1), which cooperates with the membrane form (L-OPA1) to coordinate the fusion of mitochondrial inner membranes. Following stress conditions that induce loss of mitochondrial membrane potential, mediates cleavage of OPA1, leading to excess production of soluble OPA1 (S-OPA1) and negative regulation of mitochondrial fusion. Involved in mitochondrial safeguard in response to transient mitochondrial membrane depolarization (flickering) by catalyzing cleavage of OPA1, leading to excess production of S-OPA1, preventing mitochondrial hyperfusion. Also acts as a regulator of apoptosis: upon BAK and BAX aggregation, mediates cleavage of OPA1, leading to the remodeling of mitochondrial cristae and allowing the release of cytochrome c from mitochondrial cristae. In depolarized mitochondria, may also act as a backup protease for PINK1 by mediating PINK1 cleavage and promoting its subsequent degradation by the proteasome. May also cleave UQCC3 in response to mitochondrial depolarization. Also acts as an activator of the integrated stress response (ISR): in response to mitochondrial stress, mediates cleavage of DELE1 to generate the processed form of DELE1 (S-DELE1), which translocates to the cytosol and activates EIF2AK1/HRI to trigger the ISR. Its role in mitochondrial quality control is essential for regulating lipid metabolism as well as to maintain body temperature and energy expenditure under cold-stress conditions. Binds cardiolipin, possibly regulating its protein turnover. Required for the stability of the respiratory supercomplexes. This Bos taurus (Bovine) protein is Metalloendopeptidase OMA1, mitochondrial.